The following is a 650-amino-acid chain: Probable acyl-CoA dehydrogenase FadE10 (650 aa).

Positions 1 to 23 (MAQQTQVTEEQARALAEESRESG) are disordered. The segment covering 10–23 (EQARALAEESRESG) has biased composition (basic and acidic residues). Glutamate 422 functions as the Proton acceptor in the catalytic mechanism.

It belongs to the acyl-CoA dehydrogenase family. FAD is required as a cofactor.

The enzyme catalyses a 2,3-saturated acyl-CoA + A = a 2,3-dehydroacyl-CoA + AH2. The protein is Probable acyl-CoA dehydrogenase FadE10 (fadE10) of Mycobacterium tuberculosis (strain CDC 1551 / Oshkosh).